A 397-amino-acid chain; its full sequence is Stearoyl-[acyl-carrier-protein] 9-desaturase, chloroplastic (397 aa).

Residues 1–33 (MALNFNAIASKSQKLPCFALPPKATLRSPKFSM) constitute a chloroplast transit peptide. Fe cation is bound by residues Glu-138, Glu-176, His-179, Glu-229, Glu-262, and His-265.

It belongs to the fatty acid desaturase type 2 family. As to quaternary structure, homodimer. Fe(2+) serves as cofactor.

It localises to the plastid. It is found in the chloroplast. The enzyme catalyses octadecanoyl-[ACP] + 2 reduced [2Fe-2S]-[ferredoxin] + O2 + 2 H(+) = (9Z)-octadecenoyl-[ACP] + 2 oxidized [2Fe-2S]-[ferredoxin] + 2 H2O. The protein operates within lipid metabolism; fatty acid metabolism. Converts stearoyl-ACP to oleoyl-ACP by introduction of a cis double bond between carbons 9 and 10 of the acyl chain. The protein is Stearoyl-[acyl-carrier-protein] 9-desaturase, chloroplastic of Gossypium hirsutum (Upland cotton).